The following is a 196-amino-acid chain: Probable GTP-binding protein EngB (196 aa).

The EngB-type G domain occupies 24 to 196 (ELSEVALSGR…IWNLIEPYIS (173 aa)). GTP contacts are provided by residues 32 to 39 (GRSNVGKS), 59 to 63 (GKTQT), 77 to 80 (DVPG), 144 to 147 (TKED), and 176 to 178 (YSS). 2 residues coordinate Mg(2+): Ser39 and Thr61.

The protein belongs to the TRAFAC class TrmE-Era-EngA-EngB-Septin-like GTPase superfamily. EngB GTPase family. The cofactor is Mg(2+).

Its function is as follows. Necessary for normal cell division and for the maintenance of normal septation. This chain is Probable GTP-binding protein EngB, found in Staphylococcus aureus (strain MW2).